We begin with the raw amino-acid sequence, 136 residues long: Urease subunit beta (136 aa).

The interval 113-136 is disordered; the sequence is NDEYAGVFGDNGAENVNKKGRKRS.

This sequence belongs to the urease beta subunit family. In terms of assembly, heterotrimer of UreA (gamma), UreB (beta) and UreC (alpha) subunits. Three heterotrimers associate to form the active enzyme.

The protein resides in the cytoplasm. It carries out the reaction urea + 2 H2O + H(+) = hydrogencarbonate + 2 NH4(+). The protein operates within nitrogen metabolism; urea degradation; CO(2) and NH(3) from urea (urease route): step 1/1. This is Urease subunit beta from Staphylococcus aureus (strain Newman).